We begin with the raw amino-acid sequence, 1902 residues long: Plexin-B3 (1902 aa).

Positions methionine 1–alanine 34 are cleaved as a signal peptide. The region spanning histidine 35–valine 461 is the Sema domain. The Extracellular portion of the chain corresponds to histidine 35–glutamine 1245. Asparagine 41 carries N-linked (GlcNAc...) asparagine glycosylation. 2 disulfide bridges follow: cysteine 88-cysteine 97 and cysteine 122-cysteine 130. N-linked (GlcNAc...) asparagine glycosylation occurs at asparagine 221. Disulfide bonds link cysteine 257/cysteine 360, cysteine 273/cysteine 305, and cysteine 323/cysteine 347. The tract at residues aspartate 353–arginine 372 is disordered. Asparagine 416 and asparagine 469 each carry an N-linked (GlcNAc...) asparagine glycan. The PSI 1 domain maps to alanine 463–leucine 515. 5 cysteine pairs are disulfide-bonded: cysteine 464/cysteine 481, cysteine 470/cysteine 514, cysteine 473/cysteine 490, cysteine 484/cysteine 496, and cysteine 551/cysteine 569. PSI domains are found at residues aspartate 609–proline 671 and aspartate 776–proline 822. N-linked (GlcNAc...) asparagine glycans are attached at residues asparagine 791, asparagine 889, asparagine 946, asparagine 1090, and asparagine 1207. IPT/TIG domains are found at residues proline 824–tyrosine 913, aspartate 915–threonine 1001, and asparagine 1003–glutamine 1134. Residues valine 1246–tyrosine 1266 traverse the membrane as a helical segment. Over arginine 1267 to leucine 1902 the chain is Cytoplasmic.

The protein belongs to the plexin family. In terms of assembly, binds MET and MST1R. Interacts with RIT2/RIN. Interacts (via cytoplasmic domain) with FSCN1 and RAC1. May form homodimers (via Sema domain). Interacts (via cytoplasmic domain) with ARHGDIA. In terms of tissue distribution, expressed in glioma cells (at protein level). Expressed in glioma cells and oligodendrocyte precursor cells.

The protein localises to the cell membrane. Its function is as follows. Receptor for SEMA5A that plays a role in axon guidance, invasive growth and cell migration. Stimulates neurite outgrowth and mediates Ca(2+)/Mg(2+)-dependent cell aggregation. In glioma cells, SEMA5A stimulation of PLXNB3 results in the disassembly of F-actin stress fibers, disruption of focal adhesions and cellular collapse as well as inhibition of cell migration and invasion through ARHGDIA-mediated inactivation of RAC1. The sequence is that of Plexin-B3 (Plxnb3) from Rattus norvegicus (Rat).